The sequence spans 350 residues: Flap endonuclease 1 (350 aa).

The tract at residues 1 to 102 (MGVTALRELI…REIERRQKLK (102 aa)) is N-domain. Positions 31, 84, 156, 158, 177, 179, and 240 each coordinate Mg(2+). An I-domain region spans residues 120 to 261 (EARKYAQMSA…TALRYVKSYG (142 aa)). An interaction with PCNA region spans residues 339 to 347 (KQSTLDMFF).

This sequence belongs to the XPG/RAD2 endonuclease family. FEN1 subfamily. As to quaternary structure, interacts with PCNA. PCNA stimulates the nuclease activity without altering cleavage specificity. Mg(2+) serves as cofactor.

Functionally, structure-specific nuclease with 5'-flap endonuclease and 5'-3' exonuclease activities involved in DNA replication and repair. During DNA replication, cleaves the 5'-overhanging flap structure that is generated by displacement synthesis when DNA polymerase encounters the 5'-end of a downstream Okazaki fragment. Binds the unpaired 3'-DNA end and kinks the DNA to facilitate 5' cleavage specificity. Cleaves one nucleotide into the double-stranded DNA from the junction in flap DNA, leaving a nick for ligation. Also involved in the base excision repair (BER) pathway. Acts as a genome stabilization factor that prevents flaps from equilibrating into structures that lead to duplications and deletions. Also possesses 5'-3' exonuclease activity on nicked or gapped double-stranded DNA. This Ignicoccus hospitalis (strain KIN4/I / DSM 18386 / JCM 14125) protein is Flap endonuclease 1.